The sequence spans 514 residues: FAD-dependent monooxygenase CPUR_05423 (514 aa).

Residues Val79 and Arg146 each coordinate FAD. Arg227 is an active-site residue. Positions 358 and 371 each coordinate FAD.

The protein belongs to the paxM FAD-dependent monooxygenase family. FAD serves as cofactor.

Its pathway is pigment biosynthesis. Its function is as follows. FAD-dependent monooxygenase; part of the ergochrome gene cluster responsible for the typical purple-black color of the ergot sclerotia. The ergochrome gene cluster produces several ergot pigments including the yellow ergochrome secalonic acid and its derivatives, as well as the red anthraquinones endocrocin and clavorubin. The pathway begins with the synthesis of atrochrysone thioester by the polyketide synthase (PKS) CPUR_05437. The atrochrysone carboxyl ACP thioesterase CPUR_05436 then breaks the thioester bond and releases the atrochrysone carboxylic acid from CPUR_05437. The atrochrysone carboxylic acid is then converted to atrochrysone which is further transformed into emodin anthrone. The next step is performed by the anthrone oxygenase CPUR_05434 that catalyzes the oxidation of emodinanthrone to emodin. Emodin is further modified to yield monodictyphenone via several steps involving CPUR_05427, CPUR_05428, CPUR_05429 and CPUR_05430. The short chain dehydrogenase/reductase CPUR_05418 then catalyzes the C-5 ketoreduction to give the xanthone skeleton of the monomeric units. Ergochromes formation requires further dimerization steps of different xanthone units, probably catalyzed by the cytochrome P450 monooxygenase CPUR_05419. CPUR_05425, CPUR_05426 and CPUR_05431 are unique to Claviceps, thus it is likely that they are involved in further modification of xanthone units or in their dimerization. The yellow ergochromes and the red anthraquinone pigments endocrocin and clavorubin are products from the same PKS derived precursors and the latter are likely shunt products in the pathway of xanthone biosynthesis. It is proposed that atrochrysone carboxylic acid released from the PKS CPUR_05437 can also be converted to endocrocin anthrone which is further oxidized into endocrocin by CPUR_05435. Endocrocin could be then modified to clavorubin, possibly by CPUR_05423 and CPUR_05431. Clavorubin is the principal anthraquinone metabolite produced by the cluster with a much higher yield compared to endocrocin. The chain is FAD-dependent monooxygenase CPUR_05423 from Claviceps purpurea (strain 20.1) (Ergot fungus).